A 451-amino-acid polypeptide reads, in one-letter code: Eukaryotic translation initiation factor 5 (451 aa).

29 to 36 serves as a coordination point for GTP; sequence GRGNGIKT. Disordered regions lie at residues 143-233 and 263-299; these read LKNP…DDDV and STEETEKKMKQPTHKDGSTNGSAKEIPNDKPAVTKPS. Over residues 147-178 the composition is skewed to basic and acidic residues; it reads PEQKKGGKDKKAMRRAEKERLKEGEAADEEQK. Residues 179-188 are compositionally biased toward basic residues; sequence KLKKDAKKKG. Basic and acidic residues-rich tracts occupy residues 208 to 226 and 266 to 279; these read DEDHSSSPTRSHDGDKAAA and ETEKKMKQPTHKDG. Residues 290–449 form the W2 domain; it reads NDKPAVTKPS…QSAESDEEGD (160 aa).

It belongs to the eIF-2-beta/eIF-5 family.

Its function is as follows. Catalyzes the hydrolysis of GTP bound to the 40S ribosomal initiation complex (40S.mRNA.Met-tRNA[F].eIF-2.GTP) with the subsequent joining of a 60S ribosomal subunit resulting in the release of eIF-2 and the guanine nucleotide. The subsequent joining of a 60S ribosomal subunit results in the formation of a functional 80S initiation complex (80S.mRNA.Met-tRNA[F]). This Zea mays (Maize) protein is Eukaryotic translation initiation factor 5 (EIF5).